The primary structure comprises 715 residues: Fatty acid oxidation complex subunit alpha (715 aa).

The segment at 1-189 (MIYQGETLTV…KVGAIDAVVA (189 aa)) is enoyl-CoA hydratase/isomerase. Residue Asp296 participates in substrate binding. The 3-hydroxyacyl-CoA dehydrogenase stretch occupies residues 311-715 (AKATSHAAVL…EMAAQGKTFY (405 aa)). NAD(+) is bound by residues Met325, Asp344, 401–403 (VVE), Lys408, and Ser430. His451 serves as the catalytic For 3-hydroxyacyl-CoA dehydrogenase activity. Asn454 contributes to the NAD(+) binding site. Asn501 and Tyr661 together coordinate substrate.

It in the N-terminal section; belongs to the enoyl-CoA hydratase/isomerase family. The protein in the C-terminal section; belongs to the 3-hydroxyacyl-CoA dehydrogenase family. Heterotetramer of two alpha chains (FadB) and two beta chains (FadA).

It carries out the reaction a (3S)-3-hydroxyacyl-CoA + NAD(+) = a 3-oxoacyl-CoA + NADH + H(+). The enzyme catalyses a (3S)-3-hydroxyacyl-CoA = a (2E)-enoyl-CoA + H2O. The catalysed reaction is a 4-saturated-(3S)-3-hydroxyacyl-CoA = a (3E)-enoyl-CoA + H2O. It catalyses the reaction (3S)-3-hydroxybutanoyl-CoA = (3R)-3-hydroxybutanoyl-CoA. It carries out the reaction a (3Z)-enoyl-CoA = a 4-saturated (2E)-enoyl-CoA. The enzyme catalyses a (3E)-enoyl-CoA = a 4-saturated (2E)-enoyl-CoA. It participates in lipid metabolism; fatty acid beta-oxidation. Its function is as follows. Involved in the aerobic and anaerobic degradation of long-chain fatty acids via beta-oxidation cycle. Catalyzes the formation of 3-oxoacyl-CoA from enoyl-CoA via L-3-hydroxyacyl-CoA. It can also use D-3-hydroxyacyl-CoA and cis-3-enoyl-CoA as substrate. In Aeromonas hydrophila subsp. hydrophila (strain ATCC 7966 / DSM 30187 / BCRC 13018 / CCUG 14551 / JCM 1027 / KCTC 2358 / NCIMB 9240 / NCTC 8049), this protein is Fatty acid oxidation complex subunit alpha.